We begin with the raw amino-acid sequence, 211 residues long: Histidine biosynthesis bifunctional protein HisIE (211 aa).

The interval 1-122 (MSFKTAEVSS…DPQEESQMVW (122 aa)) is phosphoribosyl-AMP cyclohydrolase. The segment at 123–211 (LHQLEQLLAA…VINKLKERHK (89 aa)) is phosphoribosyl-ATP pyrophosphohydrolase.

This sequence in the N-terminal section; belongs to the PRA-CH family. It in the C-terminal section; belongs to the PRA-PH family.

It is found in the cytoplasm. It catalyses the reaction 1-(5-phospho-beta-D-ribosyl)-ATP + H2O = 1-(5-phospho-beta-D-ribosyl)-5'-AMP + diphosphate + H(+). The catalysed reaction is 1-(5-phospho-beta-D-ribosyl)-5'-AMP + H2O = 1-(5-phospho-beta-D-ribosyl)-5-[(5-phospho-beta-D-ribosylamino)methylideneamino]imidazole-4-carboxamide. It functions in the pathway amino-acid biosynthesis; L-histidine biosynthesis; L-histidine from 5-phospho-alpha-D-ribose 1-diphosphate: step 2/9. Its pathway is amino-acid biosynthesis; L-histidine biosynthesis; L-histidine from 5-phospho-alpha-D-ribose 1-diphosphate: step 3/9. This chain is Histidine biosynthesis bifunctional protein HisIE, found in Vibrio vulnificus (strain CMCP6).